The chain runs to 353 residues: Peroxidase C1A (353 aa).

An N-terminal signal peptide occupies residues 1-30 (MHFSSSSTLFTCITLIPLVCLILHASLSDA). The residue at position 31 (glutamine 31) is a Pyrrolidone carboxylic acid. Intrachain disulfides connect cysteine 41–cysteine 121, cysteine 74–cysteine 79, cysteine 127–cysteine 331, and cysteine 207–cysteine 239. N-linked (GlcNAc...) asparagine glycosylation is present at asparagine 43. Histidine 72 serves as the catalytic Proton acceptor. 5 residues coordinate Ca(2+): aspartate 73, valine 76, glycine 78, aspartate 80, and serine 82. Asparagine 87 carries N-linked (GlcNAc...) asparagine glycosylation. Residue glutamate 94 coordinates Ca(2+). Residue proline 169 participates in substrate binding. Asparagine 188 is a glycosylation site (N-linked (GlcNAc...) asparagine). Residue histidine 200 coordinates heme b. Threonine 201 serves as a coordination point for Ca(2+). Asparagine 216, asparagine 228, and asparagine 244 each carry an N-linked (GlcNAc...) asparagine glycan. Positions 252, 255, and 260 each coordinate Ca(2+). Residues asparagine 285 and asparagine 298 are each glycosylated (N-linked (GlcNAc...) asparagine). The propeptide occupies 339–353 (LLHDMVEVVDFVSSM).

Belongs to the peroxidase family. Classical plant (class III) peroxidase subfamily. Monomer. Ca(2+) serves as cofactor. It depends on heme b as a cofactor.

It is found in the secreted. It localises to the vacuole. The catalysed reaction is 2 a phenolic donor + H2O2 = 2 a phenolic radical donor + 2 H2O. Its function is as follows. Removal of H(2)O(2), oxidation of toxic reductants, biosynthesis and degradation of lignin, suberization, auxin catabolism, response to environmental stresses such as wounding, pathogen attack and oxidative stress. These functions might be dependent on each isozyme/isoform in each plant tissue. This chain is Peroxidase C1A (PRXC1A), found in Armoracia rusticana (Horseradish).